The primary structure comprises 520 residues: MSNISTDLQDVEKIIVLDYGSQYNQLISRRIREIGVFSELKSHKISAAEVREVNPVGIILSGGPNSVYEDGSFDIDPEIFELGIPILGICYGMQLLTHKLGGKVVPAGDAGNREYGQSTLTHTPSALFESTPDEQTVLMSHGDAVTEIPADFVRTGTSADCPYAAIENPDKHIYGIQFHPEVRHSVYGNDILRNFALNICKAKGDWSMDNFIDMQIKKIRETVGDKRVLLGLSGGVDSSVVGVLLQKAIGDQLICIFVDHGLLRKGEADQVMDMLGGKFGLNIVKADAAKRFLDKLAGVSDPEQKRKIIGNEFVYVFDDEASKLKDVKFLAQGTLYTDVIESGTDTAQTIKSHHNVGGLPEDMQFELIEPLNTLYKDEVRALGTELGMPDHIVWRQPFPGPGLAIRVMGEITEEKLETVRESDAILREEIAKAGLDRDIWQYFTVNTGVRSVGVMGDGRTYDYTIAIRAITSIDGMTADFAKIPWEVLQKISVRIVNEVDHVNRIVYDITSKPPATVEWE.

The region spanning Lys13–Asp205 is the Glutamine amidotransferase type-1 domain. Cys90 (nucleophile) is an active-site residue. Catalysis depends on residues His179 and Glu181. The GMPS ATP-PPase domain maps to Trp206–Arg395. An ATP-binding site is contributed by Ser233–Ser239.

Homodimer.

It carries out the reaction XMP + L-glutamine + ATP + H2O = GMP + L-glutamate + AMP + diphosphate + 2 H(+). It participates in purine metabolism; GMP biosynthesis; GMP from XMP (L-Gln route): step 1/1. In terms of biological role, catalyzes the synthesis of GMP from XMP. The protein is GMP synthase [glutamine-hydrolyzing] of Streptococcus pneumoniae serotype 2 (strain D39 / NCTC 7466).